Reading from the N-terminus, the 274-residue chain is Rhamnulose-1-phosphate aldolase (274 aa).

Glu117 is an active-site residue. Zn(2+) contacts are provided by His141, His143, and His212.

It belongs to the aldolase class II family. RhaD subfamily. In terms of assembly, homotetramer. Zn(2+) serves as cofactor.

The protein localises to the cytoplasm. The catalysed reaction is L-rhamnulose 1-phosphate = (S)-lactaldehyde + dihydroxyacetone phosphate. It functions in the pathway carbohydrate degradation; L-rhamnose degradation; glycerone phosphate from L-rhamnose: step 3/3. Catalyzes the reversible cleavage of L-rhamnulose-1-phosphate to dihydroxyacetone phosphate (DHAP) and L-lactaldehyde. This chain is Rhamnulose-1-phosphate aldolase, found in Escherichia coli O45:K1 (strain S88 / ExPEC).